A 987-amino-acid polypeptide reads, in one-letter code: MKVVNLKQAILQAWKERWSDYQWAINMKKFFPKGATWDILNLAEALLEQAMIGPSPNPLILSYLKYAISSQMVSYSSVLTAISKFDDFSRDLCVQALLDIMDMFCDRLSCHGKAEECIGLCRALLSALHWLLRCTAASAERLQEGLEAGSAVTGEKQLALCLQCLEKTLSSTKNRALLHIAKLEEASSWTAIEHCLLKLGEILANLSNPQLRSQAEHCGTLIRSIPTMLSVHSEQLHKTGFPTIHALILLEGTMNLTGEMQPLVEQLMMVKRMQHIPTPLFVLEIWKACFVGLIESPEGTQELKWTAFTYLKIPQVLVKLKKYFHGDKDFTEDVNCAFEFLLKLTPLLDKADQRCNCDCTNFLLQECNKQGLLSEASFASLVSKRTADRDPQLKSSENANIQPNPGLILRAEPTVTNILKTMDADHSKSPEGLLGVLGHMLSGKSLDLLLAAAAATGKLKSFARKFINLNEFTTHGSGESTKTASVRALLFDISFLMLCHVAQTYGSEVILSESSSGEEVPFFETWMQTCMPEEGKILNPDHPCFRPDSTKVESLVALLNNSSEMKLVQMKWHEACLSISAAILEILNAWENGVLAFESIQKITDNIKGKVCSLAVCAVAWLVAHVRMLGLDEREKSLQMIRQLAGPLYSENTLQFYNERVVIMNSILEHMCADVLQQTATQIKFPSTGVDTMPYWNLLPPKRPIKEVLTDIFAKVLEKGWVDSRSIHILDTLLHMGGVYWFCNNLIKELLKETRKEHTLRAVQLLYSIFCLDMQQVTLVLLGHILPGLLTDSSKWHSLMDPPGTALAKLAVWCALSSYSSHKGQASSRQKKRHREDIEDYISLFPVEDMQPSKLMRLLSSNEDDASILSSPTDRSMNSSLSASQLHTVNMRDPLNRVLANLFLLISSVLGSRTAGPHTQFVQWFMEECVDCLEQDSRGSILQFMPFTTVSELVKVSAMSSPKVVLAITDLSLPLGRQVAAKAIAAL.

Short sequence motifs (LXXLL motif) lie at residues 128–132 (LHWLL), 344–348 (LTPLL), 446–450 (LDLLL), 555–559 (LVALL), 786–790 (LPGLL), and 855–859 (LMRLL). 2 positions are modified to phosphoserine: Ser-860 and Ser-871.

It belongs to the Mediator complex subunit 24 family. Component of the Mediator complex, which is composed of MED1, MED4, MED6, MED7, MED8, MED9, MED10, MED11, MED12, MED13, MED13L, MED14, MED15, MED16, MED17, MED18, MED19, MED20, MED21, MED22, MED23, MED24, MED25, MED26, MED27, MED29, MED30, MED31, CCNC, CDK8 and CDC2L6/CDK11. The MED12, MED13, CCNC and CDK8 subunits form a distinct module termed the CDK8 module. Mediator containing the CDK8 module is less active than Mediator lacking this module in supporting transcriptional activation. Individual preparations of the Mediator complex lacking one or more distinct subunits have been variously termed ARC, CRSP, DRIP, PC2, SMCC and TRAP. Interacts with AR.

The protein resides in the nucleus. Its function is as follows. Component of the Mediator complex, a coactivator involved in the regulated transcription of nearly all RNA polymerase II-dependent genes. Mediator functions as a bridge to convey information from gene-specific regulatory proteins to the basal RNA polymerase II transcription machinery. Mediator is recruited to promoters by direct interactions with regulatory proteins and serves as a scaffold for the assembly of a functional preinitiation complex with RNA polymerase II and the general transcription factors. In Rattus norvegicus (Rat), this protein is Mediator of RNA polymerase II transcription subunit 24 (Med24).